The primary structure comprises 821 residues: High affinity potassium transporter (821 aa).

Positions 1 to 10 (MSDSQSNKQN) are enriched in polar residues. The disordered stretch occupies residues 1–47 (MSDSQSNKQNQGEDDNNVSSSIESNENYPFRLNDEESEPQSSTTESM). The Cytoplasmic segment spans residues 1–57 (MSDSQSNKQNQGEDDNNVSSSIESNENYPFRLNDEESEPQSSTTESMLKAKKQSWRQ). Residues 17–27 (NVSSSIESNEN) show a composition bias toward low complexity. A helical membrane pass occupies residues 58 to 78 (VLMLGFSSLGAIYGDIGTSPL). Over 79-101 (YVLNSIKYPNSSPTEEDIYGAIS) the chain is Extracellular. Residues 102 to 122 (IIFYLFTFIVIFKYILIVLFL) form a helical membrane-spanning segment. Over 123–190 (GTNDGEGGQV…KASGFKTNPK (68 aa)) the chain is Cytoplasmic. Residues 191 to 211 (LIKFISKFILFGCFFGCSLVM) form a helical membrane-spanning segment. Residues 212 to 238 (SDGLLTPTTSVLSAIAGIQIANPSFND) are Extracellular-facing. Residues 239 to 259 (VLAVSEVVLIVLFLIQQFGSN) traverse the membrane as a helical segment. Position 260 (lysine 260) is a topological domain, cytoplasmic. A helical transmembrane segment spans residues 261 to 281 (ISFTFAPIIFLWLIGLIISGI). The Extracellular segment spans residues 282 to 306 (YNIVKFHPAVFKSLSPYYAIQLLKH). Residues 307–327 (SGIDVFSGAMLSITGTEAMFA) traverse the membrane as a helical segment. At 328-340 (DVGHFGRLPIQLT) the chain is on the cytoplasmic side. The helical transmembrane segment at 341–361 (LTLFVYPALIICYLGQGAYII) threads the bilayer. The Extracellular segment spans residues 362–386 (KHPEALSNPFFYSIPGGLNSWIYWV). Residues 387–407 (MFVLATLSTIIASQALILGVF) form a helical membrane-spanning segment. Residues 408-434 (SITSQLINLDCFPNFKIIHVSKKYAGK) lie on the Cytoplasmic side of the membrane. The helical transmembrane segment at 435–455 (VYIPAINWLLMIGVCATTAGF) threads the bilayer. At 456–463 (KNSNNVTA) the chain is on the extracellular side. Asparagine 460 carries an N-linked (GlcNAc...) asparagine glycan. A helical membrane pass occupies residues 464–484 (AYGLGITLDFLVTSSLIMVCM). The Cytoplasmic segment spans residues 485 to 491 (TYVYNWN). A helical transmembrane segment spans residues 492–512 (ILIPITYALIFLPLEVIMVIS). The Extracellular portion of the chain corresponds to 513 to 516 (NLKK). The chain crosses the membrane as a helical span at residues 517–537 (ITHGAWFPLMMSGIFMMFLSF). Residues 538–821 (WRWARSRKVN…KMFLGGVVRI (284 aa)) are Cytoplasmic-facing.

Belongs to the HAK/KUP transporter (TC 2.A.72) family.

Its subcellular location is the membrane. Its function is as follows. Major high-affinity potassium uptake protein. This Schwanniomyces occidentalis (Yeast) protein is High affinity potassium transporter (HAK1).